The chain runs to 250 residues: tRNA (guanine-N(7)-)-methyltransferase (250 aa).

Over residues 1-10 (MTPDDPRDAS) the composition is skewed to basic and acidic residues. The disordered stretch occupies residues 1–30 (MTPDDPRDASDASLADATADSASRGHGSFF). Low complexity predominate over residues 11 to 24 (DASLADATADSASR). The S-adenosyl-L-methionine site is built by Glu79, Glu104, Asp131, and Asp153. The active site involves Asp153. Residues Lys157 and Asp189 each coordinate substrate.

The protein belongs to the class I-like SAM-binding methyltransferase superfamily. TrmB family.

The catalysed reaction is guanosine(46) in tRNA + S-adenosyl-L-methionine = N(7)-methylguanosine(46) in tRNA + S-adenosyl-L-homocysteine. It functions in the pathway tRNA modification; N(7)-methylguanine-tRNA biosynthesis. In terms of biological role, catalyzes the formation of N(7)-methylguanine at position 46 (m7G46) in tRNA. The protein is tRNA (guanine-N(7)-)-methyltransferase of Rhodopseudomonas palustris (strain BisA53).